A 528-amino-acid chain; its full sequence is Sensory rhodopsin I transducer (528 aa).

Transmembrane regions (helical) follow at residues 11-31 (GAKL…VGVV) and 35-55 (VAST…INAA). HAMP domains are found at residues 55–107 (AETV…DRLS) and 142–195 (TAYQ…ETIE). Residues 214-455 (TSRRVQQEVD…ATADSIADVT (242 aa)) enclose the Methyl-accepting transducer domain. Glu259 is modified (glutamate methyl ester (Glu)).

It belongs to the methyl-accepting chemotaxis (MCP) protein family. Interacts with Sop1.

Its subcellular location is the cell membrane. Transduces signals from the phototaxis receptor sensory rhodopsin I (Sop1). The polypeptide is Sensory rhodopsin I transducer (htr1) (Haloarcula marismortui (strain ATCC 43049 / DSM 3752 / JCM 8966 / VKM B-1809) (Halobacterium marismortui)).